The following is a 65-amino-acid chain: Hainantoxin-X (65 aa).

Residues 1–20 form the signal peptide; that stretch reads MNMKILVLVAVLCLVVSTHA. The propeptide occupies 21 to 37; sequence ERHSKTDMEDSPMIQER. Intrachain disulfides connect C39–C56, C46–C59, and C55–C64.

Belongs to the neurotoxin 36 family. 02 subfamily. In terms of tissue distribution, expressed by the venom gland.

The protein localises to the secreted. Functionally, reversibly blocks N-type calcium channels (Cav2.2/CACNA1B) in rat dorsal root ganglion cells. Elicits no toxic symptoms in either vertebrates or invertebrates during a period of 48 hours post-injection, when it was assayed in vivo by direct injection into mice and cockroaches. This is Hainantoxin-X from Cyriopagopus hainanus (Chinese bird spider).